The following is a 940-amino-acid chain: Phosphoenolpyruvate carboxylase (940 aa).

Catalysis depends on residues His-138 and Lys-603.

Belongs to the PEPCase type 1 family. The cofactor is Mg(2+).

It carries out the reaction oxaloacetate + phosphate = phosphoenolpyruvate + hydrogencarbonate. In terms of biological role, forms oxaloacetate, a four-carbon dicarboxylic acid source for the tricarboxylic acid cycle. This Streptococcus thermophilus (strain ATCC BAA-250 / LMG 18311) protein is Phosphoenolpyruvate carboxylase.